Consider the following 244-residue polypeptide: Phosphonates import ATP-binding protein PhnC 2 (244 aa).

The ABC transporter domain occupies 6 to 244 (IECHNLETAY…LQAQFVVNNQ (239 aa)). 41-48 (GLNGAGKS) contacts ATP.

This sequence belongs to the ABC transporter superfamily. Phosphonates importer (TC 3.A.1.9.1) family. In terms of assembly, the complex is composed of two ATP-binding proteins (PhnC), two transmembrane proteins (PhnE) and a solute-binding protein (PhnD).

It is found in the cell inner membrane. It catalyses the reaction phosphonate(out) + ATP + H2O = phosphonate(in) + ADP + phosphate + H(+). Part of the ABC transporter complex PhnCDE involved in phosphonates import. Responsible for energy coupling to the transport system. The sequence is that of Phosphonates import ATP-binding protein PhnC 2 from Nostoc sp. (strain PCC 7120 / SAG 25.82 / UTEX 2576).